Consider the following 410-residue polypeptide: Eukaryotic initiation factor 4A (410 aa).

Positions 37-65 (ESFDSMGLQENLLRGIYAYGFEKPSAIQQ) match the Q motif motif. The region spanning 68 to 238 (IVPFCKGLDV…RKFMNKPVRI (171 aa)) is the Helicase ATP-binding domain. ATP is bound at residue 81–88 (AQSGTGKT). The short motif at 186–189 (DEAD) is the DEAD box element. Residues 249–410 (GIKQFYVNID…ELPANVADLL (162 aa)) enclose the Helicase C-terminal domain.

Belongs to the DEAD box helicase family. eIF4A subfamily. As to quaternary structure, eIF4F is a multi-subunit complex, the composition of which varies with external and internal environmental conditions. It is composed of at least EIF4A, EIF4E and EIF4G.

The enzyme catalyses ATP + H2O = ADP + phosphate + H(+). Its function is as follows. ATP-dependent RNA helicase which is a subunit of the eIF4F complex involved in cap recognition and is required for mRNA binding to ribosome. In the current model of translation initiation, eIF4A unwinds RNA secondary structures in the 5'-UTR of mRNAs which is necessary to allow efficient binding of the small ribosomal subunit, and subsequent scanning for the initiator codon. This chain is Eukaryotic initiation factor 4A, found in Zea mays (Maize).